The chain runs to 1988 residues: Sodium channel protein type 9 subunit alpha (1988 aa).

Over 1–125 (MAMLPPPGPQ…RRISIKILVH (125 aa)) the chain is Cytoplasmic. The segment covering 26-39 (RIAERKSKEPKEEK) has biased composition (basic and acidic residues). The interval 26–55 (RIAERKSKEPKEEKKDDDEEAPKPSSDLEA) is disordered. Residues 112 to 410 (FSPLRRISIK…VAMAYEEQNQ (299 aa)) form an I repeat. A helical membrane pass occupies residues 126–145 (SLFSMLIMCTILTNCIFMTM). Over 146–150 (NNPPD) the chain is Extracellular. A helical membrane pass occupies residues 151–172 (WTKNVEYTFTGIYTFESLVKIL). Over 173–185 (ARGFCVGEFTFLR) the chain is Cytoplasmic. A helical transmembrane segment spans residues 186 to 204 (DPWNWLDFVVIVFAYLTEF). The Extracellular portion of the chain corresponds to 205–210 (VNLGNV). The N-linked (GlcNAc...) asparagine glycan is linked to N209. Residues 211-227 (SALRTFRVLRALKTISV) form a helical membrane-spanning segment. Topologically, residues 228–241 (IPGLKTIVGALIQS) are cytoplasmic. Residues 242–267 (VKKLSDVMILTVFCLSVFALIGLQLF) traverse the membrane as a helical segment. The Extracellular segment spans residues 268-346 (MGNLKHKCFR…PDYGYTSFDT (79 aa)). A disulfide bridge connects residues C275 and C324. N283 carries N-linked (GlcNAc...) asparagine glycosylation. Residues 347–363 (FSWAFLALFRLMTQDYW) constitute an intramembrane region (pore-forming). The Extracellular portion of the chain corresponds to 364–376 (ENLYQQTLRAAGK). The chain crosses the membrane as a helical span at residues 377-402 (TYMIFFVVVIFLGSFYLINLILAVVA). The Cytoplasmic segment spans residues 403–745 (MAYEEQNQAN…CIYFIVMDPF (343 aa)). A compositionally biased stretch (low complexity) spans 461 to 471 (SSSETSKLSSK). Disordered stretches follow at residues 461-543 (SSSE…RGSL) and 565-611 (GSET…SPPM). The span at 474–486 (KERRNRRKKKNQK) shows a compositional bias: basic residues. 2 stretches are compositionally biased toward basic and acidic residues: residues 489 to 510 (SSGEEKGDAEKLSKSESEDSIR) and 573 to 585 (DEHSIFGDNESRR). The II repeat unit spans residues 726–989 (CSPYWIKFKK…EEDPDANNLQ (264 aa)). The helical transmembrane segment at 746-762 (VDLAITICIVLNTLFMA) threads the bilayer. Over 763–771 (MEHHPMTEE) the chain is Extracellular. A helical membrane pass occupies residues 772–796 (FKNVLAIGNLVFTGIFAAEMVLKLI). Over 797-805 (AMDPYEYFQ) the chain is Cytoplasmic. Residues 806 to 822 (VGWNIFDSLIVTLSLVE) traverse the membrane as a helical segment. Residues 823–831 (LFLADVEGL) are Extracellular-facing. Residues 832 to 848 (SVLRSFRLLRVFKLAKS) traverse the membrane as a helical segment. Topologically, residues 849 to 865 (WPTLNMLIKIIGNSVGA) are cytoplasmic. A helical transmembrane segment spans residues 866–888 (LGNLTLVLAIIVFIFAVVGMQLF). The Extracellular segment spans residues 889 to 915 (GKSYKECVCKINDDCTLPRWHMNDFFH). C897 and C903 are oxidised to a cystine. The segment at residues 916-928 (SFLIVFRVLCGEW) is an intramembrane region (pore-forming). Residues 929 to 940 (IETMWDCMEVAG) are Extracellular-facing. An intrachain disulfide couples C935 to C944. A helical transmembrane segment spans residues 941–967 (QAMCLIVYMMVMVIGNLVVLNLFLALL). Residues 968 to 1187 (LSSFSSDNLT…WWNIRKTCYK (220 aa)) lie on the Cytoplasmic side of the membrane. Residues 1102–1148 (NAEELSSDSDSEYSKVRLNRSSSSECSTVDNPLPGEGEEAEAEPMNS) form a disordered region. Over residues 1120–1131 (NRSSSSECSTVD) the composition is skewed to polar residues. The segment covering 1137–1148 (EGEEAEAEPMNS) has biased composition (acidic residues). One copy of the III repeat lies at 1180–1488 (NIRKTCYKIV…KKYYNAMKKL (309 aa)). A helical transmembrane segment spans residues 1188-1212 (IVEHSWFESFIVLMILLSSGALAFE). Over 1213-1224 (DIYIERKKTIKI) the chain is Extracellular. Residues 1225–1250 (ILEYADKIFTYIFILEMLLKWIAYGY) traverse the membrane as a helical segment. At 1251–1252 (KT) the chain is on the cytoplasmic side. Residues 1253 to 1278 (YFTNAWCWLDFLIVDVSLVTLVANTL) form a helical membrane-spanning segment. The Extracellular segment spans residues 1279-1287 (GYSDLGPIK). Residues 1288–1304 (SLRTLRALRPLRALSRF) traverse the membrane as a helical segment. Residues 1305 to 1317 (EGMRVVVNALIGA) are Cytoplasmic-facing. Residues 1318-1342 (IPSIMNVLLVCLIFWLIFSIMGVNL) traverse the membrane as a helical segment. At 1343–1394 (FAGKFYECINTTDGSRFPASQVPNRSECFALMNVSQNVRWKNLKVNFDNVGL) the chain is on the extracellular side. The cysteines at positions 1350 and 1370 are disulfide-linked. N-linked (GlcNAc...) asparagine glycans are attached at residues N1352, N1366, and N1375. Positions 1395–1405 (GYLSLLQVATF) form an intramembrane region, pore-forming. Over 1406–1431 (KGWTIIMYAAVDSVNVDKQPKYEYSL) the chain is Extracellular. The helical transmembrane segment at 1432-1457 (YMYIYFVVFIIFGSFFTLNLFIGVII) threads the bilayer. The Cytoplasmic segment spans residues 1458–1514 (DNFNQQKKKLGGQDIFMTEEQKKYYNAMKKLGSKKPQKPIPRPGNKIQGCIFDLVTN). The residue at position 1490 (S1490) is a Phosphoserine; by PKC. Residues 1497 to 1795 (IPRPGNKIQG…WEKFDPDATQ (299 aa)) form an IV repeat. A helical transmembrane segment spans residues 1515 to 1534 (QAFDISIMVLICLNMVTMMV). Residues 1535-1545 (EKEGQSQHMTE) lie on the Extracellular side of the membrane. The helical transmembrane segment at 1546–1567 (VLYWINVVFIILFTGECVLKLI) threads the bilayer. Topologically, residues 1568–1576 (SLRHYYFTV) are cytoplasmic. The helical transmembrane segment at 1577–1598 (GWNIFDFVVVIISIVGMFLADL) threads the bilayer. Over 1599–1607 (IETYFVSPT) the chain is Extracellular. The chain crosses the membrane as a helical span at residues 1608 to 1627 (LFRVIRLARIGRILRLVKGA). Residues 1628-1640 (KGIRTLLFALMMS) lie on the Cytoplasmic side of the membrane. Residues 1641 to 1663 (LPALFNIGLLLFLVMFIYAIFGM) traverse the membrane as a helical segment. Residues 1664–1686 (SNFAYVKKEDGINDMFNFETFGN) are Extracellular-facing. The segment at residues 1687–1699 (SMICLFQITTSAG) is an intramembrane region (pore-forming). Topologically, residues 1700 to 1733 (WDGLLAPILNSKPPDCDPKKVHPGSSVEGDCGNP) are extracellular. C1715 and C1730 are joined by a disulfide. A helical membrane pass occupies residues 1734-1759 (SVGIFYFVSYIIISFLVVVNMYIAVI). Residues 1760–1988 (LENFSVATEE…KGKDSKESKK (229 aa)) lie on the Cytoplasmic side of the membrane. One can recognise an IQ domain in the interval 1889–1918 (EDVSATVIQRAYRRYRLRQNVKNISSIYIK). The segment at 1934-1988 (FDNVNENSSPEKTDATSSTTSPPSYDSVTKPDKEKYEQDRTEKEDKGKDSKESKK) is disordered. A compositionally biased stretch (low complexity) spans 1948 to 1961 (ATSSTTSPPSYDSV). Residues 1962 to 1988 (TKPDKEKYEQDRTEKEDKGKDSKESKK) are compositionally biased toward basic and acidic residues.

It belongs to the sodium channel (TC 1.A.1.10) family. Nav1.7/SCN9A subfamily. As to quaternary structure, the Nav1.7 voltage-gated sodium channel consists of an ion-conducting alpha subunit SCN9A which is functional on its own regulated by one or more beta-1 (SCN1B), beta-2 (SCN2B), beta-3 (SCN3B) and beta-4 (SCN4B) subunits. SCN1B and SCN3B are non-covalently associated with SCN9A. SCN2B and SCN4B are disulfide-linked to SCN9A. SCN1B regulates channel inactivation. Interacts with NEDD4 and NEDD4L; regulates Nav1.7 activity most probably through ubiquitination and subsequent endocytosis. Interacts with TMEM233; modulates the gating properties of NaV1.7. In terms of processing, phosphorylation at Ser-1490 by PKC in a highly conserved cytoplasmic loop increases peak sodium currents. Post-translationally, ubiquitinated by NEDD4L; which may promote its endocytosis. As to expression, expressed strongly in dorsal root ganglion, with only minor levels elsewhere in the body, smooth muscle cells, MTC cell line and C-cell carcinoma. Also expressed in vagus nerves within the head and neck region. Isoform 1 is expressed preferentially in the central and peripheral nervous system. Isoform 2 is expressed preferentially in the dorsal root ganglion.

It localises to the cell membrane. The protein resides in the cell projection. The protein localises to the neuron projection. It is found in the axon. The enzyme catalyses Na(+)(in) = Na(+)(out). Its activity is regulated as follows. Inhibited by tetrodotoxin. Weakly inhibited by saxitoxin. Inhibited by the spider huwentoxin-IV that binds the extracellular loop S3-S4 of repeat II. Inhibited by the spider protoxin-II that binds the extracellular loop S3-S4 of repeats II and IV. Inhibited by the scorpion alpha-toxins CvIV4 and AaH2. Inhibited by the conotoxin GVIIJ. Inhibited by the spider beta/delta-theraphotoxin-Pre1a. Functionally, pore-forming subunit of Nav1.7, a voltage-gated sodium (Nav) channel that directly mediates the depolarizing phase of action potentials in excitable membranes. Navs, also called VGSCs (voltage-gated sodium channels) or VDSCs (voltage-dependent sodium channels), operate by switching between closed and open conformations depending on the voltage difference across the membrane. In the open conformation they allow Na(+) ions to selectively pass through the pore, along their electrochemical gradient. The influx of Na(+) ions provokes membrane depolarization, initiating the propagation of electrical signals throughout cells and tissues. Nav1.7 plays a crucial role in controlling the excitability and action potential propagation from nociceptor neurons, thereby contributing to the sensory perception of pain. The sequence is that of Sodium channel protein type 9 subunit alpha from Homo sapiens (Human).